Here is a 394-residue protein sequence, read N- to C-terminus: 1-deoxy-D-xylulose 5-phosphate reductoisomerase (394 aa).

The NADPH site is built by Thr-14, Gly-15, Ser-16, Ile-17, Gly-40, Asn-43, and Asn-130. 1-deoxy-D-xylulose 5-phosphate is bound at residue Lys-131. An NADPH-binding site is contributed by Glu-132. Residue Asp-154 coordinates Mn(2+). 1-deoxy-D-xylulose 5-phosphate-binding residues include Ser-155, Glu-156, Ser-180, and His-203. Glu-156 is a Mn(2+) binding site. An NADPH-binding site is contributed by Gly-209. 1-deoxy-D-xylulose 5-phosphate-binding residues include Ser-216, Asn-221, Lys-222, and Glu-225. Glu-225 lines the Mn(2+) pocket.

Belongs to the DXR family. Mg(2+) serves as cofactor. Requires Mn(2+) as cofactor.

It carries out the reaction 2-C-methyl-D-erythritol 4-phosphate + NADP(+) = 1-deoxy-D-xylulose 5-phosphate + NADPH + H(+). It functions in the pathway isoprenoid biosynthesis; isopentenyl diphosphate biosynthesis via DXP pathway; isopentenyl diphosphate from 1-deoxy-D-xylulose 5-phosphate: step 1/6. Its function is as follows. Catalyzes the NADPH-dependent rearrangement and reduction of 1-deoxy-D-xylulose-5-phosphate (DXP) to 2-C-methyl-D-erythritol 4-phosphate (MEP). The polypeptide is 1-deoxy-D-xylulose 5-phosphate reductoisomerase (Corynebacterium efficiens (strain DSM 44549 / YS-314 / AJ 12310 / JCM 11189 / NBRC 100395)).